Reading from the N-terminus, the 946-residue chain is Bifunctional glutamine synthetase adenylyltransferase/adenylyl-removing enzyme (946 aa).

The tract at residues M1 to E441 is adenylyl removase. An adenylyl transferase region spans residues D448–D946.

This sequence belongs to the GlnE family. Mg(2+) is required as a cofactor.

The catalysed reaction is [glutamine synthetase]-O(4)-(5'-adenylyl)-L-tyrosine + phosphate = [glutamine synthetase]-L-tyrosine + ADP. The enzyme catalyses [glutamine synthetase]-L-tyrosine + ATP = [glutamine synthetase]-O(4)-(5'-adenylyl)-L-tyrosine + diphosphate. Functionally, involved in the regulation of glutamine synthetase GlnA, a key enzyme in the process to assimilate ammonia. When cellular nitrogen levels are high, the C-terminal adenylyl transferase (AT) inactivates GlnA by covalent transfer of an adenylyl group from ATP to specific tyrosine residue of GlnA, thus reducing its activity. Conversely, when nitrogen levels are low, the N-terminal adenylyl removase (AR) activates GlnA by removing the adenylyl group by phosphorolysis, increasing its activity. The regulatory region of GlnE binds the signal transduction protein PII (GlnB) which indicates the nitrogen status of the cell. The polypeptide is Bifunctional glutamine synthetase adenylyltransferase/adenylyl-removing enzyme (Psychromonas ingrahamii (strain DSM 17664 / CCUG 51855 / 37)).